The following is a 2410-amino-acid chain: MEQTLAQAVSRKSKTDTPMAEERKHFSPMNFSANFVAPELFYSANVRKIKNIFRERSTTRFLDAISSDFELVAFLTLSPAHLMQLETVLRHEMRSCVVPIVTSDASFETVAVIKTALDGMRFHFGYTTLEKGWISMMRHAESCLQESSSSAVNDLQTQIKRVGSLLLSGKNRVEGCELSVLNLTARRFRIEYGLNGTYFGEHVAMLRGLKRYIYGTVPKEFLWAKTKKHSLFTIPAWIKRTPIDCFLFCLRVIPILHRCGVAVSLIYWSCAAALNFPAFMSFLFKRQFAKYLAHSFAKHSIYFMFLTIVAILWSFRTFTSQKPKIVLQARSTAEKEKKLMMILASVVGITYLFDYDIAEALGNCLHKISRLSSYLLDDHQGIASRMFGASYGLQAGDSAEDAVTTIISDLLSVTFKIVDEDASQGTVEDASETTFHSWVGVNTLAGRNMSRPLQYSVNETYALTPQNVQLQARKMADANNCWSMVVGHTGSGKSTYLPVQYSNYLSTKSDRRQQILICEPTQAATENVCAGVAANLGRAVYGRHEGWSRMGDHCIQVMTYGSALQCHAMDPSFISTFDAIFLDEAHDVKEHSLVFESICDTFKSVRKFYVSATPRDGSVCPEAARKYPLHVETSVCDSYRKFIAAQGGGDLLDISKHDTALVFLAGRPECIKAANAWNASVTGEKRAFSLSSDNFATDFSMLTERLKTHKTIIFTTNIIETGVTLSVDCVVDFGHTMRPCLDLNQKALRLDRRRVTRNERQQRIGRAGRLKDGYAIVCGDVDRAVNVISPDVLYGAALLSFKHNVPFYMNETFESSWLEGITKAQADTMTIFKLPIFLTRDLINADGSVAKEFLDVLKKHQFTTSDIKQAPSVTAKHIFPTWASYFSLHQALHYGDDKDEVPHELRYARVPFSVTTLSKFDWPALALACEKHRASMSNVFAGIEEPARVVTLQTNPANIQASITHLTHMSKNYKTLIENNQHVRQSMVTNVMYKWFSSTRITKDLDRNLRRCTDNLAVVEATLSSLRQILAGNTQVHATPHMQSTLEDIIGLQASDTLTEESLASALGIFVPKSNLFLLLATKGFKLVYVVCILLLVNLVYLGLRKWREHLKQKGSNEILTNTMPVSEGGEILAEVMKMEPKMRKNIKKDMDAAVESKLCGFTFVFPDDDKIGLEGKGNKYRPREDARLMYSTREDATLDAWNEKAKERRKKVTDKSEPELRRAYEKRPYFNFYDLQTDSNILEAIFYTTEGDEFFRTADPNKDMNLVADKLRSFLDTKLVVGHHQRQMLEETAKVVIKDTKGTAHHMDISQHDPDHLKQNGSGKIGYPEHRGQFRQEGPAKTADYDLGVEFGTDTDDITLEASTGILLSQVGVDVATRVGRIFIGTFNMNCYFYSDWILVPGHLQDRSGNVTIQFPDQTVQTTTDALNANGVKRFYGLDVIAIRRPAILRPRTKLVKAFAIEEPVIAQMVFVDAQGVRKFTQSVRARKEENSGRWSHKISTVLGMCGCQFWTLERQIDGIHVATNYTKKRNEFQPFTQEVVDFINGPGTKIPYCPWVFDRPACGYASHTALFEKPTTLTDIIHMQASDGLHNINNAIEGFGSSLRGQLVSPPTESTRQRFDKLFGSGSFELIGQMNKGLIDKHVIVGENDDVHDFMREHPTFTWLKDFMNEYAPSVLSYSAYYKDLCKYNRAKHVLTYNPEELHYATKGLIKMLEDAGLTQGSVRTPQQVISDIQWNTSAGPSYQGKKRDLCAHLSDDEVLHLAEVCRQQFLEGKSTGVWNGSLKAELRTIEKVEAEKTRVFTASPITSLFAMKFYVDDFNKKFYATNLKAPHTVGINKFGRGWEKLHDKLNRPGWLHGSGDGSRFDSSIDPLFFDVVKTIRKHFLPSEHHKAIDLIYDEILNTTICLANGMVIKKNVGTQRQPSTVVDNTLVLMTAFLYAYIHKTGDRELALLNERFIFVCNGDDNKFAISPQFDEEFGHDFSPELVELGLTYEFDDITSDICENPYMSLTMVKTPFGVGFSLPVERIIAIMQWSKKGGVLHSYLAGISAIYESFNTPKLFKSIYAYLLWLTEEHEAEILAAMTQSSTALPIPSMLDVYRLHYGDDEIWLQAADPLTDAQKEDARIAAADGARFELADADRRRKVEADRVEAARVKKAADAALKPVNLTATRTPTEDDGKLKTPSGARIPSSAADGNWSVPATKQVNAGLTLKIPLNKLKSVPKSVMEHNNSVALESELKAWTDAVRTSLGITTDEAWIDALIPFIGWCCNNGTSDKHAENQVMQIDSGKGAVTEMSLSPFIVHARMNGGLRRIMRNYSDETVLLITNNKLVAHWSMKHGASANAKYAFDFFVPRSWMNPQDIEVSKQARLAALGTGTYNTMLTSDTTNLRKTTNHRVLDSDGHPELT.

The tract at residues 1–22 (MEQTLAQAVSRKSKTDTPMAEE) is disordered. One can recognise a Helicase ATP-binding domain in the interval 474–632 (KMADANNCWS…AARKYPLHVE (159 aa)). Residue 487 to 494 (GHTGSGKS) participates in ATP binding. In terms of domain architecture, Helicase C-terminal spans 647–813 (GGGDLLDISK…NVPFYMNETF (167 aa)). Tyr-1234 is modified (O-(5'-phospho-RNA)-tyrosine). Positions 1359–1573 (ITLEASTGIL…CGYASHTALF (215 aa)) constitute a Peptidase C4 domain. Catalysis depends on for nuclear inclusion protein A activity residues His-1404, Asp-1440, and Cys-1507. The RdRp catalytic domain maps to 1857 to 1980 (WLHGSGDGSR…AISPQFDEEF (124 aa)). A disordered region spans residues 2173-2200 (TRTPTEDDGKLKTPSGARIPSSAADGNW).

It belongs to the bymoviruses polyprotein 1 family. Post-translationally, VPg is uridylylated by the polymerase and is covalently attached to the 5'-end of the genomic RNA. This uridylylated form acts as a nucleotide-peptide primer for the polymerase. The viral RNA1 of bymoviruses is expressed as a single polyprotein which undergoes post-translational proteolytic processing by the main proteinase NIa-pro resulting in the production of at least eight individual proteins.

Its subcellular location is the host cytoplasmic vesicle. The protein resides in the virion. The catalysed reaction is RNA(n) + a ribonucleoside 5'-triphosphate = RNA(n+1) + diphosphate. It catalyses the reaction Hydrolyzes glutaminyl bonds, and activity is further restricted by preferences for the amino acids in P6 - P1' that vary with the species of potyvirus, e.g. Glu-Xaa-Xaa-Tyr-Xaa-Gln-|-(Ser or Gly) for the enzyme from tobacco etch virus. The natural substrate is the viral polyprotein, but other proteins and oligopeptides containing the appropriate consensus sequence are also cleaved.. In terms of biological role, indispensable for virus replication. Mediates the cap-independent, EIF4E-dependent translation of viral genomic RNAs. Binds to the cap-binding site of host EIF4E and thus interferes with the host EIF4E-dependent mRNA export and translation. VPg-RNA directly binds EIF4E and is a template for transcription. Also forms trimeric complexes with EIF4E-EIF4G, which are templates for translation. Its function is as follows. Has RNA-binding and proteolytic activities. Functionally, an RNA-dependent RNA polymerase that plays an essential role in the virus replication. This is Genome polyprotein 1 from Hordeum vulgare (Barley).